The primary structure comprises 300 residues: Telomere repeat-binding factor 1 (300 aa).

An HTH myb-type domain is found at 1–58; it reads MGAPKQKWTQEEESALKSGVIKHGPGKWRTILKDPEFSGVLYLRSNVDLKDKWRNMSV. The H-T-H motif DNA-binding region spans 28–57; that stretch reads WRTILKDPEFSGVLYLRSNVDLKDKWRNMS. 2 disordered regions span residues 93–119 and 185–213; these read LQSD…RPNV and NSTP…PSPK. Residues 117-185 enclose the H15 domain; sequence PNVRLDSLIM…KVKRKYRIPN (69 aa). The stretch at 241-290 forms a coiled coil; that stretch reads EAAAVAAQAVAEAEAAMAEAEEAAKEAEAAEAEAEAAQAFAEEASKTLKG.

Belongs to the histone H1/H5 family. SMH subfamily. In terms of assembly, forms a homodimer and heterodimers with TRB2 or TRB3. Interacts with POT1b, TRB2 and TRB3 through its H15 domain.

It is found in the nucleus. It localises to the nucleolus. Its subcellular location is the chromosome. Binds preferentially double-stranded telomeric repeats. This is Telomere repeat-binding factor 1 (TRB1) from Arabidopsis thaliana (Mouse-ear cress).